The primary structure comprises 270 residues: Tryptophan synthase alpha chain (270 aa).

Residues glutamate 60 and aspartate 71 each act as proton acceptor in the active site.

This sequence belongs to the TrpA family. As to quaternary structure, tetramer of two alpha and two beta chains.

The catalysed reaction is (1S,2R)-1-C-(indol-3-yl)glycerol 3-phosphate + L-serine = D-glyceraldehyde 3-phosphate + L-tryptophan + H2O. It functions in the pathway amino-acid biosynthesis; L-tryptophan biosynthesis; L-tryptophan from chorismate: step 5/5. Functionally, the alpha subunit is responsible for the aldol cleavage of indoleglycerol phosphate to indole and glyceraldehyde 3-phosphate. The polypeptide is Tryptophan synthase alpha chain (Deinococcus radiodurans (strain ATCC 13939 / DSM 20539 / JCM 16871 / CCUG 27074 / LMG 4051 / NBRC 15346 / NCIMB 9279 / VKM B-1422 / R1)).